We begin with the raw amino-acid sequence, 348 residues long: Large ribosomal subunit protein uL3m (348 aa).

Residues 1-40 (MPGWRLLAQAGARVLGCGARGLGADPGLERRKNILFFVRN) constitute a mitochondrion transit peptide.

This sequence belongs to the universal ribosomal protein uL3 family. In terms of assembly, component of the mitochondrial ribosome large subunit (39S) which comprises a 16S rRNA and about 50 distinct proteins.

The protein localises to the mitochondrion. The protein is Large ribosomal subunit protein uL3m (Mrpl3) of Mus musculus (Mouse).